A 193-amino-acid polypeptide reads, in one-letter code: Ion-translocating oxidoreductase complex subunit A (193 aa).

The next 6 membrane-spanning stretches (helical) occupy residues 4–24 (LLLI…RFLG), 39–59 (LGMG…TWVL), 72–92 (LQTI…EMIV), 102–122 (SLGI…LAVL), 134–154 (LVFA…FAGL), and 171–191 (PIEL…AGLV).

This sequence belongs to the NqrDE/RnfAE family. As to quaternary structure, the complex is composed of six subunits: RnfA, RnfB, RnfC, RnfD, RnfE and RnfG.

The protein localises to the cell inner membrane. Its function is as follows. Part of a membrane-bound complex that couples electron transfer with translocation of ions across the membrane. The chain is Ion-translocating oxidoreductase complex subunit A from Syntrophotalea carbinolica (strain DSM 2380 / NBRC 103641 / GraBd1) (Pelobacter carbinolicus).